Consider the following 329-residue polypeptide: MSNSMLDKNKAILTGGGALLLGLIVLFYLAYRPKAEVLQGFLEAREYSVSSKVPGRIEKVFVKKGDRIKKGDLVFSISSPELEAKLAQAEAGHKAAKAVSDEVKRGSRDETINSARDVWQAAKSQANLAKETYKRVQDLYDNGVASLQKRDEAYAAYESTKYNESAAYQKYKMALGGASSESKIAAKAKESAALGQVNEVESYLKDVKALAPIDGEVSNVLLSGGELSPKGFPVVLMIDLKDSWLKISVPEKYLNEFKVGKEFEGYIPALKRSAKFRVKYLSVMGDFATWKATNNSNTYDMKSYEVEAIPLEELENFRVGMSVLVTIKP.

A helical transmembrane segment spans residues 11-31 (AILTGGGALLLGLIVLFYLAY).

The protein belongs to the membrane fusion protein (MFP) (TC 8.A.1) family.

It is found in the membrane. This is 36 kDa antigen from Helicobacter pylori (strain J99 / ATCC 700824) (Campylobacter pylori J99).